A 1018-amino-acid chain; its full sequence is 2-oxoglutarate dehydrogenase-like, mitochondrial (1018 aa).

The Ca(2+) site is built by histidine 138, aspartate 151, and aspartate 153. Residues arginine 307, aspartate 406, asparagine 439, isoleucine 441, and glutamine 671 each coordinate thiamine diphosphate. Aspartate 406, asparagine 439, and isoleucine 441 together coordinate Mg(2+).

This sequence belongs to the alpha-ketoglutarate dehydrogenase family. As to quaternary structure, the OGDHC complex comprises multiple copies of three catalytic enzyme components, the 2-oxoglutarate dehydrogenase (OGDH/E1), the dihydrolipoamide dehydrogenase (DLST/E2) and the dihydrolipoamide dehydrogenase (DLD/E3). OGDHL/E1-like isoenzyme may replace OGDH in the OGDHC complex in the brain. Thiamine diphosphate serves as cofactor. Requires Mg(2+) as cofactor.

The protein resides in the mitochondrion matrix. The catalysed reaction is N(6)-[(R)-lipoyl]-L-lysyl-[protein] + 2-oxoglutarate + H(+) = N(6)-[(R)-S(8)-succinyldihydrolipoyl]-L-lysyl-[protein] + CO2. Its function is as follows. 2-oxoglutarate dehydrogenase (E1-like) component of the 2-oxoglutarate dehydrogenase multienzyme complex (OGDHC) which mediates the decarboxylation of alpha-ketoglutarate in the tricarboxylic acid cycle. The OGDHC complex catalyzes the overall conversion of 2-oxoglutarate to succinyl-CoA and CO(2) while reducing NAD(+) to NADH. The OGDHC complex is mainly active in the mitochondrion. Involved in the inhibition of cell proliferation and in apoptosis. The polypeptide is 2-oxoglutarate dehydrogenase-like, mitochondrial (ogdhl) (Xenopus laevis (African clawed frog)).